Consider the following 904-residue polypeptide: Protein translocase subunit SecA (904 aa).

ATP contacts are provided by residues Gln-89, 107-111 (GEGKT), and Asp-502. Zn(2+)-binding residues include Cys-886, Cys-888, Cys-897, and His-898.

It belongs to the SecA family. As to quaternary structure, monomer and homodimer. Part of the essential Sec protein translocation apparatus which comprises SecA, SecYEG and auxiliary proteins SecDF-YajC and YidC. The cofactor is Zn(2+).

Its subcellular location is the cell inner membrane. It is found in the cytoplasm. The catalysed reaction is ATP + H2O + cellular proteinSide 1 = ADP + phosphate + cellular proteinSide 2.. Functionally, part of the Sec protein translocase complex. Interacts with the SecYEG preprotein conducting channel. Has a central role in coupling the hydrolysis of ATP to the transfer of proteins into and across the cell membrane, serving both as a receptor for the preprotein-SecB complex and as an ATP-driven molecular motor driving the stepwise translocation of polypeptide chains across the membrane. This chain is Protein translocase subunit SecA, found in Rhizobium etli (strain CIAT 652).